A 150-amino-acid polypeptide reads, in one-letter code: MESANASTSAQSIDQLCKECNIPMHNLQILCVFCRKTLSTAEVYSFAYKQLYVVYRGNFPFAACAICLELQGKVNQFRHFNYAGYAVTVEEETNKSILDVLIRCYLCHKPLCHVEKVRHILDKARFIKLQDTWKGRCFHCWTSCMETILP.

2 zinc fingers span residues 31 to 67 (CVFCRKTLSTAEVYSFAYKQLYVVYRGNFPFAACAIC) and 104 to 140 (CYLCHKPLCHVEKVRHILDKARFIKLQDTWKGRCFHC).

This sequence belongs to the papillomaviridae E6 protein family. In terms of assembly, forms homodimers. Interacts with ubiquitin-protein ligase UBE3A/E6-AP; this interaction stimulates UBE3A ubiquitin activity. Interacts with host TP53 and EP300; this interaction inhibits TP53 activity.

The protein localises to the host cytoplasm. Its subcellular location is the host nucleus. Functionally, this protein may be involved in the oncogenic potential of this virus (cervical neoplasia-associated virus). In terms of biological role, plays a major role in the induction and maintenance of cellular transformation. E6 associates with host UBE3A/E6-AP ubiquitin-protein ligase and modulates its activity. Sequesters tumor suppressor TP53 in the host cytoplasm and modulates its activity by interacting with host EP300 that results in the reduction of TP53 acetylation and activation. In turn, apoptosis induced by DNA damage is inhibited. E6 also protects host keratinocytes from apoptosis by mediating the degradation of host BAK1. May also inhibit host immune response. The chain is Protein E6 from Human papillomavirus 44.